Consider the following 346-residue polypeptide: Methionine import ATP-binding protein MetN 1 (346 aa).

Positions 2–241 constitute an ABC transporter domain; that stretch reads IELKNVSKVF…PQHVTTKKFV (240 aa). 38-45 contacts ATP; the sequence is GYSGAGKS.

Belongs to the ABC transporter superfamily. Methionine importer (TC 3.A.1.24) family. The complex is composed of two ATP-binding proteins (MetN), two transmembrane proteins (MetI) and a solute-binding protein (MetQ).

The protein resides in the cell membrane. It catalyses the reaction L-methionine(out) + ATP + H2O = L-methionine(in) + ADP + phosphate + H(+). The enzyme catalyses D-methionine(out) + ATP + H2O = D-methionine(in) + ADP + phosphate + H(+). Functionally, part of the ABC transporter complex MetNIQ involved in methionine import. Responsible for energy coupling to the transport system. The sequence is that of Methionine import ATP-binding protein MetN 1 from Bacillus cereus (strain ATCC 14579 / DSM 31 / CCUG 7414 / JCM 2152 / NBRC 15305 / NCIMB 9373 / NCTC 2599 / NRRL B-3711).